Reading from the N-terminus, the 329-residue chain is UDP-N-acetylenolpyruvoylglucosamine reductase (329 aa).

In terms of domain architecture, FAD-binding PCMH-type spans 28 to 192 (RVGGPADLLC…ARVEVRLHAG (165 aa)). Arginine 172 is an active-site residue. The interval 202–227 (REDRERRRATQPLDRPTFGSTFTNPP) is disordered. Serine 221 (proton donor) is an active-site residue. The active site involves glutamate 291. Residues 307–329 (DGHAAAGGGPGAASGGVRPPEAT) are disordered. A compositionally biased stretch (gly residues) spans 311-320 (AAGGGPGAAS).

It belongs to the MurB family. FAD is required as a cofactor.

The protein localises to the cytoplasm. The catalysed reaction is UDP-N-acetyl-alpha-D-muramate + NADP(+) = UDP-N-acetyl-3-O-(1-carboxyvinyl)-alpha-D-glucosamine + NADPH + H(+). Its pathway is cell wall biogenesis; peptidoglycan biosynthesis. In terms of biological role, cell wall formation. This chain is UDP-N-acetylenolpyruvoylglucosamine reductase, found in Anaeromyxobacter sp. (strain K).